Here is a 150-residue protein sequence, read N- to C-terminus: 3-dehydroquinate dehydratase (150 aa).

The active-site Proton acceptor is the Y22. Positions 73, 79, and 86 each coordinate substrate. The active-site Proton donor is H99. Substrate-binding positions include 100–101 (LT) and R110.

Belongs to the type-II 3-dehydroquinase family. In terms of assembly, homododecamer.

The enzyme catalyses 3-dehydroquinate = 3-dehydroshikimate + H2O. It functions in the pathway metabolic intermediate biosynthesis; chorismate biosynthesis; chorismate from D-erythrose 4-phosphate and phosphoenolpyruvate: step 3/7. Its function is as follows. Catalyzes a trans-dehydration via an enolate intermediate. This is 3-dehydroquinate dehydratase from Desulforudis audaxviator (strain MP104C).